The primary structure comprises 77 residues: Large ribosomal subunit protein bL28 (77 aa).

This sequence belongs to the bacterial ribosomal protein bL28 family.

This Verminephrobacter eiseniae (strain EF01-2) protein is Large ribosomal subunit protein bL28.